Consider the following 582-residue polypeptide: Potassium-transporting ATPase potassium-binding subunit (582 aa).

The next 10 membrane-spanning stretches (helical) occupy residues Ala11–Val31, Leu81–Phe101, Phe148–Phe168, Leu195–Ile215, Val272–Val292, Gly298–Val318, Ala379–Gly399, Gly401–Gly421, Val439–Val459, and Gly551–Phe571.

The protein belongs to the KdpA family. As to quaternary structure, the system is composed of three essential subunits: KdpA, KdpB and KdpC.

It localises to the cell membrane. Its function is as follows. Part of the high-affinity ATP-driven potassium transport (or Kdp) system, which catalyzes the hydrolysis of ATP coupled with the electrogenic transport of potassium into the cytoplasm. This subunit binds the extracellular potassium ions and delivers the ions to the membrane domain of KdpB through an intramembrane tunnel. This Halobacterium salinarum (strain ATCC 700922 / JCM 11081 / NRC-1) (Halobacterium halobium) protein is Potassium-transporting ATPase potassium-binding subunit.